Reading from the N-terminus, the 1128-residue chain is Adipocyte enhancer-binding protein 1 (1128 aa).

A signal peptide spans 1–25 (MAAVRTASLLCGLLALLALCPEGSP). The tract at residues 40 to 368 (GFLSEFETQS…PRKGEELEEE (329 aa)) is disordered. The segment covering 77–109 (PRADAEAPPEKNKDKEKKGKKDKGPKAAKHLEG) has biased composition (basic and acidic residues). Residues 113–163 (PTKKPKEKPPKATKKPKEKPPKATKKPKEKPPKATKKPKEKPPKATKRPSA) show a composition bias toward basic residues. Polar residues-rich tracts occupy residues 178 to 187 (RSLTSPSNPG) and 198 to 209 (TSLNTWQGQGEE). Positions 249 to 261 (RQKQPRPTPSRKR) are enriched in basic residues. 2 stretches are compositionally biased toward basic and acidic residues: residues 267–282 (PEEK…EVDP) and 327–363 (EELK…RKGE). The F5/8 type C domain maps to 375–532 (IKCPPIGMES…LCMRLEVLGC (158 aa)). Positions 382–547 (MESHRIEDNQ…YSYYAQNEVV (166 aa)) are required for DNA-binding and interaction with NFKBIA. 2 interaction with MAPK1 and MAPK3 regions span residues 413–616 (AGAN…TAGM) and 998–1128 (DPSR…FGDF). Asn-520 is a glycosylation site (N-linked (GlcNAc...) asparagine). Positions 547–977 (VTTDSLDFRH…TQCNFILARS (431 aa)) are interaction with PTEN. The Peptidase M14 domain occupies 555–896 (RHHSYKDMRQ…EALLTFMEQV (342 aa)). The interval 933–1128 (DYWRILNPGE…ETYTVNFGDF (196 aa)) is required for transcriptional repression. The tract at residues 1027–1056 (LRRLNSTTGPATSPTPALTLPPSPTPGSTS) is disordered. Residues 1030–1044 (LNSTTGPATSPTPAL) are compositionally biased toward low complexity.

The protein belongs to the peptidase M14 family. In terms of assembly, interacts with different types of collagen, including collagens I, III, and V. Interacts with GNG5, NFKBIA, MAPK1, MAPK3 and PTEN. May interact with calmodulin. Interaction with MAPK1 may stimulate DNA-binding. Binds to DNA in vitro. Phosphorylated by MAPK1 in vitro. In terms of tissue distribution, expressed in aorta.

It localises to the secreted. In terms of biological role, as a positive regulator of collagen fibrillogenesis, it is probably involved in the organization and remodeling of the extracellular matrix. May positively regulate MAP-kinase activity in adipocytes, leading to enhanced adipocyte proliferation and reduced adipocyte differentiation. May also positively regulate NF-kappa-B activity in macrophages by promoting the phosphorylation and subsequent degradation of I-kappa-B-alpha (NFKBIA), leading to enhanced macrophage inflammatory responsiveness. Can act as a transcriptional repressor. In Rattus norvegicus (Rat), this protein is Adipocyte enhancer-binding protein 1 (Aebp1).